A 414-amino-acid polypeptide reads, in one-letter code: DNA primase large subunit PriL (414 aa).

[4Fe-4S] cluster is bound by residues C251, C352, C370, and C376.

Belongs to the eukaryotic-type primase large subunit family. Heterodimer of a small subunit (PriS) and a large subunit (PriL). Requires [4Fe-4S] cluster as cofactor.

Functionally, regulatory subunit of DNA primase, an RNA polymerase that catalyzes the synthesis of short RNA molecules used as primers for DNA polymerase during DNA replication. Stabilizes and modulates the activity of the small subunit, increasing the rate of DNA synthesis, and conferring RNA synthesis capability. The DNA polymerase activity may enable DNA primase to also catalyze primer extension after primer synthesis. May also play a role in DNA repair. This is DNA primase large subunit PriL from Methanocaldococcus jannaschii (strain ATCC 43067 / DSM 2661 / JAL-1 / JCM 10045 / NBRC 100440) (Methanococcus jannaschii).